The chain runs to 109 residues: MRLSTATLLLLLASCLSPGHGILEAHYTNLKCRCSGVISTVVGLNIIDRIQVTPPGNGCPKTEVVIWTKMKKVICVNPRAKWLQRLLRHVQSKSLSSTPQAPVSKRRAA.

The signal sequence occupies residues 1-21 (MRLSTATLLLLLASCLSPGHG). 2 disulfides stabilise this stretch: Cys32–Cys59 and Cys34–Cys75.

It belongs to the intercrine alpha (chemokine CxC) family. As to expression, found in spleen (B-cell-rich zone or follicles), Peyer patches (strongest within germinal centers and extending to the mantle zone) and lymph nodes (in reticular pattern in follicles).

The protein localises to the secreted. Its function is as follows. Strongly chemotactic for B-lymphocytes, weakly for spleen monocytes and macrophages but no chemotactic activity for granulocytes. Binds to BLR1/CXCR5. May play a role in directing the migration of B-lymphocytes to follicles in secondary lymphoid organs. The polypeptide is C-X-C motif chemokine 13 (Cxcl13) (Mus musculus (Mouse)).